Here is a 108-residue protein sequence, read N- to C-terminus: Phosphoribosyl-ATP pyrophosphatase (108 aa).

Positions 88–108 (VENELDRREGRSGIEEKASRK) are disordered. Residues 91-108 (ELDRREGRSGIEEKASRK) show a composition bias toward basic and acidic residues.

The protein belongs to the PRA-PH family.

The protein resides in the cytoplasm. It carries out the reaction 1-(5-phospho-beta-D-ribosyl)-ATP + H2O = 1-(5-phospho-beta-D-ribosyl)-5'-AMP + diphosphate + H(+). It participates in amino-acid biosynthesis; L-histidine biosynthesis; L-histidine from 5-phospho-alpha-D-ribose 1-diphosphate: step 2/9. This chain is Phosphoribosyl-ATP pyrophosphatase, found in Paracoccus denitrificans (strain Pd 1222).